A 557-amino-acid polypeptide reads, in one-letter code: Formate--tetrahydrofolate ligase (557 aa).

65–72 (TPAGEGKT) is a binding site for ATP.

Belongs to the formate--tetrahydrofolate ligase family.

It catalyses the reaction (6S)-5,6,7,8-tetrahydrofolate + formate + ATP = (6R)-10-formyltetrahydrofolate + ADP + phosphate. It participates in one-carbon metabolism; tetrahydrofolate interconversion. In Methylococcus capsulatus (strain ATCC 33009 / NCIMB 11132 / Bath), this protein is Formate--tetrahydrofolate ligase.